A 498-amino-acid chain; its full sequence is Dynein regulatory complex subunit 2 (498 aa).

Coiled coils occupy residues 98–160 (VIKS…RKTI), 250–311 (KDEK…KAQR), and 417–441 (SLRH…QYLD).

Belongs to the DRC2 family. In terms of assembly, component of the nexin-dynein regulatory complex (N-DRC). Interacts with DRC1.

It is found in the cytoplasm. The protein resides in the cytoskeleton. The protein localises to the flagellum basal body. Its subcellular location is the cell projection. It localises to the cilium. It is found in the flagellum. The protein resides in the flagellum axoneme. Its function is as follows. Component of the nexin-dynein regulatory complex (N-DRC), a key regulator of ciliary/flagellar motility which maintains the alignment and integrity of the distal axoneme and regulates microtubule sliding in motile axonemes. Plays a critical role in the assembly of N-DRC and also stabilizes the assembly of multiple inner dynein arms and radial spokes. Coassembles with DRC1 to form a central scaffold needed for assembly of the N-DRC and its attachment to the outer doublet microtubules. The chain is Dynein regulatory complex subunit 2 (CCDC65) from Bos taurus (Bovine).